Here is a 347-residue protein sequence, read N- to C-terminus: Haptoglobin (347 aa).

The signal sequence occupies residues 1–18 (MRALGAVITLLLWGQLFA). A Sushi domain is found at 31 to 88 (DSCPKPPEIANGYVEHLVRYQCKNYYRLRTEGDGVYALNSEKQWVNKAVGEQLPECEA). Cystine bridges form between cysteine 52–cysteine 86 and cysteine 90–cysteine 207. The 243-residue stretch at 103-345 (IIGGSLDAKG…ILDWIQKTIA (243 aa)) folds into the Peptidase S1 domain. N-linked (GlcNAc...) asparagine glycans are attached at residues asparagine 148, asparagine 152, asparagine 182, asparagine 230, and asparagine 256. 2 cysteine pairs are disulfide-bonded: cysteine 250/cysteine 281 and cysteine 292/cysteine 322. An interaction with CD163 region spans residues 259 to 264 (VPENKI).

The protein belongs to the peptidase S1 family. Tetramer of two alpha and two beta chains; disulfide-linked. The hemoglobin/haptoglobin complex is composed of a haptoglobin dimer bound to two hemoglobin alpha-beta dimers. Interacts with CD163. Interacts with ERGIC3. Expressed by the liver and secreted in plasma.

The protein resides in the secreted. As a result of hemolysis, hemoglobin is found to accumulate in the kidney and is secreted in the urine. Haptoglobin captures, and combines with free plasma hemoglobin to allow hepatic recycling of heme iron and to prevent kidney damage. Haptoglobin also acts as an antioxidant, has antibacterial activity and plays a role in modulating many aspects of the acute phase response. Hemoglobin/haptoglobin complexes are rapidly cleared by the macrophage CD163 scavenger receptor expressed on the surface of liver Kupfer cells through an endocytic lysosomal degradation pathway. This is Haptoglobin (HP) from Oryctolagus cuniculus (Rabbit).